Reading from the N-terminus, the 204-residue chain is Holliday junction branch migration complex subunit RuvA (204 aa).

Residues 1 to 64 form a domain I region; that stretch reads MIGKLKGTID…EDQLKLFGFM (64 aa). Positions 65 to 143 are domain II; sequence TALEREWFNL…AFAGEAINIG (79 aa). Positions 144–151 are flexible linker; the sequence is LKQELGEG. The interval 152 to 204 is domain III; the sequence is VAAAPVADAVSALTNLGYSRDQAANAIAAAMKTAGEGADSAKLIRLGLKELAR.

The protein belongs to the RuvA family. As to quaternary structure, homotetramer. Forms an RuvA(8)-RuvB(12)-Holliday junction (HJ) complex. HJ DNA is sandwiched between 2 RuvA tetramers; dsDNA enters through RuvA and exits via RuvB. An RuvB hexamer assembles on each DNA strand where it exits the tetramer. Each RuvB hexamer is contacted by two RuvA subunits (via domain III) on 2 adjacent RuvB subunits; this complex drives branch migration. In the full resolvosome a probable DNA-RuvA(4)-RuvB(12)-RuvC(2) complex forms which resolves the HJ.

The protein resides in the cytoplasm. The RuvA-RuvB-RuvC complex processes Holliday junction (HJ) DNA during genetic recombination and DNA repair, while the RuvA-RuvB complex plays an important role in the rescue of blocked DNA replication forks via replication fork reversal (RFR). RuvA specifically binds to HJ cruciform DNA, conferring on it an open structure. The RuvB hexamer acts as an ATP-dependent pump, pulling dsDNA into and through the RuvAB complex. HJ branch migration allows RuvC to scan DNA until it finds its consensus sequence, where it cleaves and resolves the cruciform DNA. The sequence is that of Holliday junction branch migration complex subunit RuvA from Rhizobium johnstonii (strain DSM 114642 / LMG 32736 / 3841) (Rhizobium leguminosarum bv. viciae).